Consider the following 485-residue polypeptide: NADH-quinone oxidoreductase subunit N (485 aa).

Helical transmembrane passes span 8 to 28 (LIAL…MLSI), 35 to 55 (FLNA…LWFV), 71 to 91 (GFAM…CTFA), 105 to 125 (FYLL…ANHL), 127 to 147 (SLFL…GYAF), 159 to 179 (YTIL…LVYA), 203 to 223 (LLAG…LVPF), 235 to 255 (PAPV…GVVM), 271 to 291 (VVLA…ALSQ), 297 to 317 (LLGY…IALQ), 326 to 346 (VGVY…VVSL), 373 to 393 (AAVM…LGFI), 408 to 430 (WWLV…RVAV), and 455 to 475 (IVVL…QPLI).

This sequence belongs to the complex I subunit 2 family. NDH-1 is composed of 13 different subunits. Subunits NuoA, H, J, K, L, M, N constitute the membrane sector of the complex.

The protein resides in the cell inner membrane. The enzyme catalyses a quinone + NADH + 5 H(+)(in) = a quinol + NAD(+) + 4 H(+)(out). In terms of biological role, NDH-1 shuttles electrons from NADH, via FMN and iron-sulfur (Fe-S) centers, to quinones in the respiratory chain. The immediate electron acceptor for the enzyme in this species is believed to be ubiquinone. Couples the redox reaction to proton translocation (for every two electrons transferred, four hydrogen ions are translocated across the cytoplasmic membrane), and thus conserves the redox energy in a proton gradient. In Escherichia coli O1:K1 / APEC, this protein is NADH-quinone oxidoreductase subunit N.